The following is a 304-amino-acid chain: Porphobilinogen deaminase (304 aa).

Cysteine 240 is modified (S-(dipyrrolylmethanemethyl)cysteine).

The protein belongs to the HMBS family. In terms of assembly, monomer. Requires dipyrromethane as cofactor.

The catalysed reaction is 4 porphobilinogen + H2O = hydroxymethylbilane + 4 NH4(+). Its pathway is porphyrin-containing compound metabolism; protoporphyrin-IX biosynthesis; coproporphyrinogen-III from 5-aminolevulinate: step 2/4. Tetrapolymerization of the monopyrrole PBG into the hydroxymethylbilane pre-uroporphyrinogen in several discrete steps. This Xanthomonas campestris pv. campestris (strain ATCC 33913 / DSM 3586 / NCPPB 528 / LMG 568 / P 25) protein is Porphobilinogen deaminase.